The sequence spans 927 residues: Isoleucine--tRNA ligase (927 aa).

The 'HIGH' region motif lies at 57–67 (PYANGHIHIGH). Glutamate 561 provides a ligand contact to L-isoleucyl-5'-AMP. The 'KMSKS' region motif lies at 602–606 (KMSKS). Lysine 605 serves as a coordination point for ATP. Zn(2+)-binding residues include cysteine 897, cysteine 900, cysteine 917, and cysteine 920.

Belongs to the class-I aminoacyl-tRNA synthetase family. IleS type 1 subfamily. As to quaternary structure, monomer. Zn(2+) serves as cofactor.

The protein localises to the cytoplasm. It catalyses the reaction tRNA(Ile) + L-isoleucine + ATP = L-isoleucyl-tRNA(Ile) + AMP + diphosphate. Catalyzes the attachment of isoleucine to tRNA(Ile). As IleRS can inadvertently accommodate and process structurally similar amino acids such as valine, to avoid such errors it has two additional distinct tRNA(Ile)-dependent editing activities. One activity is designated as 'pretransfer' editing and involves the hydrolysis of activated Val-AMP. The other activity is designated 'posttransfer' editing and involves deacylation of mischarged Val-tRNA(Ile). The sequence is that of Isoleucine--tRNA ligase from Syntrophotalea carbinolica (strain DSM 2380 / NBRC 103641 / GraBd1) (Pelobacter carbinolicus).